An 883-amino-acid chain; its full sequence is Kinesin-like protein 5 (883 aa).

In terms of domain architecture, Kinesin motor spans 6–390 (SITVTVRVRP…LKYANRAKNI (385 aa)). 144–151 (GATGCGKT) provides a ligand contact to ATP. Coiled coils occupy residues 396 to 435 (RNMI…SSQS) and 563 to 588 (LQDE…VDEF). The interval 755 to 785 (VSPMLEDKPEPGLLIKSPLEKKQEVNSESTQ) is disordered.

Belongs to the TRAFAC class myosin-kinesin ATPase superfamily. Kinesin family. Kinesin II subfamily. In terms of assembly, heterodimer with klp6.

The protein localises to the cytoplasm. It localises to the cytoskeleton. Its subcellular location is the chromosome. It is found in the centromere. The protein resides in the kinetochore. The protein localises to the spindle. Its function is as follows. Has a role in establishing metaphase during mitosis. Required for chromosome segregation where it generates tension during kinetochore capturing. This chain is Kinesin-like protein 5 (klp5), found in Schizosaccharomyces pombe (strain 972 / ATCC 24843) (Fission yeast).